A 951-amino-acid polypeptide reads, in one-letter code: MEKTYNPQDIEQPLYEHWEKQGYFKPNGDESKESFCIMIPPPNVTGSLHMGHAFQQTIMDTMIRYQRMQGKNTLWQVGTDHAGIATQMVVERKIAAEEGKTRHDYGRDAFIDKIWQWKAESGGTITRQMRRLGNSVDWERERFTMDEGLSNAVKEVFVRLYKEDLIYRGKRLVNWDPKLRTAISDLEVENRESKGSMWHIRYPLADGAKTADGKDYLVVATTRPETVLGDTGVAVNPEDPRYKDLIGKFVILPLVNRRIPIVGDEHADMEKGTGCVKITPAHDFNDYEVGKRHALPMINILTFDGDIRESAEVFDTKGEESNVYSSEIPAEFQKLERFAARKAIVAAVDALGLLEEIKPHDLTVPYGDRGGVVIEPMLTDQWYVRADVLAKPAVEAVENGDIQFVPKQYENMYFSWMRDIQDWCISRQLWWGHRIPAWYGNDGNVYVGRTEDEVRQENNLGADVQLRQDEDVLDTWFSSALWTFSTLGWPENTDALRQFHPTSVMVSGFDIIFFWIARMIMMTMHFIKDENGKPQVPFHTVYMTGLIRDDEGQKMSKSKGNVIDPLDMVDGISLPELLEKRTGNMMQPQMAEKIRKRTEKQFPNGIEPHGTDALRFTLAALASTGRDINWDMKRLEGYRNFCNKLWNASRFVLMNTEEQDCGFNGGEMTLSLADRWILAEFNQTVKAYREALDNFRFDIAAGILYEFTWNQFCDWYLELTKPVMTGGSESELRGTRHTLVTVLEGLLRLAHPIIPFITETIWQRVKVICGITADTIMLQPFPEYNAAQVDEAALADTEWLKQAIVAVRNIRAEMNIAPGKPLELLLRGCSEEAVRRVNDNRSFLLNLARLESITVLPADDKGPVSVTKIIDGAELLIPMAGLINKEDELARLAKEVAKIEGEIARIEGKLSNEGFVARAPEAVIAKEREKLDGYAEAKAKLIEQQAVISAL.

A 'HIGH' region motif is present at residues 42–52 (PNVTGSLHMGH). Residues 554–558 (KMSKS) carry the 'KMSKS' region motif. An ATP-binding site is contributed by Lys557. Residues 880-944 (AGLINKEDEL…AEAKAKLIEQ (65 aa)) adopt a coiled-coil conformation.

The protein belongs to the class-I aminoacyl-tRNA synthetase family. ValS type 1 subfamily. Monomer.

The protein resides in the cytoplasm. The catalysed reaction is tRNA(Val) + L-valine + ATP = L-valyl-tRNA(Val) + AMP + diphosphate. Catalyzes the attachment of valine to tRNA(Val). As ValRS can inadvertently accommodate and process structurally similar amino acids such as threonine, to avoid such errors, it has a 'posttransfer' editing activity that hydrolyzes mischarged Thr-tRNA(Val) in a tRNA-dependent manner. The polypeptide is Valine--tRNA ligase (Salmonella paratyphi A (strain ATCC 9150 / SARB42)).